A 227-amino-acid chain; its full sequence is 2,3-bisphosphoglycerate-dependent phosphoglycerate mutase (227 aa).

Substrate-binding positions include 7 to 14, 20 to 21, Arg-59, 86 to 89, Lys-97, 113 to 114, and 182 to 183; these read RHGFSEWN, TG, ERHY, RR, and GN. His-8 serves as the catalytic Tele-phosphohistidine intermediate. Glu-86 functions as the Proton donor/acceptor in the catalytic mechanism.

The protein belongs to the phosphoglycerate mutase family. BPG-dependent PGAM subfamily. In terms of assembly, homodimer.

It carries out the reaction (2R)-2-phosphoglycerate = (2R)-3-phosphoglycerate. It functions in the pathway carbohydrate degradation; glycolysis; pyruvate from D-glyceraldehyde 3-phosphate: step 3/5. In terms of biological role, catalyzes the interconversion of 2-phosphoglycerate and 3-phosphoglycerate. The sequence is that of 2,3-bisphosphoglycerate-dependent phosphoglycerate mutase from Pasteurella multocida (strain Pm70).